A 294-amino-acid polypeptide reads, in one-letter code: Glyceraldehyde-3-phosphate dehydrogenase (294 aa).

NAD(+) is bound by residues Asp-19, Lys-63, and Thr-105. Residues 134–136 (SCT), Thr-165, 194–195 (TG), and Arg-217 each bind D-glyceraldehyde 3-phosphate. The Nucleophile role is filled by Cys-135.

Belongs to the glyceraldehyde-3-phosphate dehydrogenase family. In terms of assembly, homotetramer.

The protein resides in the cytoplasm. The enzyme catalyses D-glyceraldehyde 3-phosphate + phosphate + NAD(+) = (2R)-3-phospho-glyceroyl phosphate + NADH + H(+). It functions in the pathway carbohydrate degradation; glycolysis; pyruvate from D-glyceraldehyde 3-phosphate: step 1/5. Functionally, catalyzes the oxidative phosphorylation of glyceraldehyde 3-phosphate (G3P) to 1,3-bisphosphoglycerate (BPG) using the cofactor NAD. The first reaction step involves the formation of a hemiacetal intermediate between G3P and a cysteine residue, and this hemiacetal intermediate is then oxidized to a thioester, with concomitant reduction of NAD to NADH. The reduced NADH is then exchanged with the second NAD, and the thioester is attacked by a nucleophilic inorganic phosphate to produce BPG. This Klebsiella aerogenes (Enterobacter aerogenes) protein is Glyceraldehyde-3-phosphate dehydrogenase (gap).